Reading from the N-terminus, the 1141-residue chain is MDKPSTKIVNDYTHFYAYSWHVDEESVDETFIRVYGLDEANENVCVSVNGFRQFVWVELPSFIDWSLSHNVDRVVRYFEQTWPNVGVQFKMYRKLYGANLKQSRSNGEYVHKKFPFLQCSSMSWKMLKFTLPTALKTPQRIMGLGSIKFRVHGQDACPRLQLTSKYNLPTAGWIQFKGIEILDQDVKFSQSCREFMVDLSDKNWGKPSTMICRSDKTTVPRPLILSFDLEVNSEEVVTMPKATKPGDVVFQISCIFNRLGGVENEVERYLLSLGNPTEQIVGATILRYSTEKKLLMGFRDLVNEKNPNVITGYNIFNFDIPYLMDRTVYKSIFVEWAQQGFAKNRPGIPREIRWSSSAYKNQEFKYLDCEGRLYIDLLPVVQRDFKLNDYKLKTVSTFFIGETKDDLDPTSIFRCYREGTRDDSPKASHFMSICGKYCMQDSMLVYKLFEKLNVWYGLSEMAVVCNVPMITLFTKGQQIKVYSQLYKYCLAAKIIPEKDGYIVAENERYVGAHVFTPKPGLYENVIPLDFSSLYPSLMIAYNIDYSTCAFDASIPDQLCHIMEWEDHIGCAHDPKVVEKERLTQLINTLKNKEEVSRMRKERSEITKSLSKNVMCEKRKYRFLKSTTEDGRFKGVLPTIVQNMLDARKETRAEMGRLKKRLGTAVGEEATHLQTQIAILNQRQLAYKVSANSMYGITGVKAGMLPFMPVAMSITFMGRTNIARVAQLLQTQYQGELVYGDTDSNYVSFNHKNMSMSELWDYAIRVADEISQQFPPPIKLEFEEAIYSKFLILTKKRYLYQTALRDGTIKKEIGKRGVVLNRRDNSGFIRKIYQNMVDSIFNHVAGEGRDLKSVVLDVVTADICALFNHQFPVDDFVITKSTGNYGDLQPENFVNEKGVPRAMLGQYNVPCLTSQVREEERIETEEQEQNWYLDKLPAHIQLLEKIRRRGQMKNEGGRLEYVIVETNSLKDKQSTKIETLPYYTKNRGILKLDYLYYLHRCINPLDQILKVVFDLDDFVKRQYKAREAKKKVTLELGELFRPNFIIEKSQLQLVRARADEVYRLVYGTAADCRAQLGELGPDWCVRAKFEYVPLVDDPYRYFQQKYGATGSLKTKFDFEGRDIRLNNQPESKLVSTLKREFK.

This sequence belongs to the DNA polymerase type-B family.

It carries out the reaction DNA(n) + a 2'-deoxyribonucleoside 5'-triphosphate = DNA(n+1) + diphosphate. In terms of biological role, DNA-directed DNA polymerase involved in viral DNA replication. The polypeptide is DNA polymerase 120R (Invertebrate iridescent virus 3 (IIV-3)).